The sequence spans 219 residues: Orotate phosphoribosyltransferase (219 aa).

K26 lines the 5-phospho-alpha-D-ribose 1-diphosphate pocket. 34-35 lines the orotate pocket; that stretch reads FF. Residues 72–73, R98, K99, K102, H104, and 124–132 each bind 5-phospho-alpha-D-ribose 1-diphosphate; these read YK and DDVITAGTA. 2 residues coordinate orotate: T128 and R156.

It belongs to the purine/pyrimidine phosphoribosyltransferase family. PyrE subfamily. As to quaternary structure, homodimer. Mg(2+) serves as cofactor.

It carries out the reaction orotidine 5'-phosphate + diphosphate = orotate + 5-phospho-alpha-D-ribose 1-diphosphate. The protein operates within pyrimidine metabolism; UMP biosynthesis via de novo pathway; UMP from orotate: step 1/2. Functionally, catalyzes the transfer of a ribosyl phosphate group from 5-phosphoribose 1-diphosphate to orotate, leading to the formation of orotidine monophosphate (OMP). In Xanthomonas euvesicatoria pv. vesicatoria (strain 85-10) (Xanthomonas campestris pv. vesicatoria), this protein is Orotate phosphoribosyltransferase.